The chain runs to 292 residues: NAD kinase (292 aa).

Asp73 functions as the Proton acceptor in the catalytic mechanism. NAD(+)-binding positions include 73–74 (DG), 147–148 (NE), His158, Arg175, Asp177, 188–193 (TAYSLS), and Gln247.

This sequence belongs to the NAD kinase family. Requires a divalent metal cation as cofactor.

It is found in the cytoplasm. It carries out the reaction NAD(+) + ATP = ADP + NADP(+) + H(+). Functionally, involved in the regulation of the intracellular balance of NAD and NADP, and is a key enzyme in the biosynthesis of NADP. Catalyzes specifically the phosphorylation on 2'-hydroxyl of the adenosine moiety of NAD to yield NADP. The polypeptide is NAD kinase (Shigella boydii serotype 18 (strain CDC 3083-94 / BS512)).